The primary structure comprises 406 residues: chitinase-like effector (406 aa).

An N-terminal signal peptide occupies residues 1–23 (MLTLLPSLILLLSTLSLSTPANA). The 380-residue stretch at 26-405 (AIAKAYYPGW…DAVRHGAGFK (380 aa)) folds into the GH18 domain. Residues Tyr-138 and Trp-384 each contribute to the chitin site.

This sequence belongs to the glycosyl hydrolase 18 family.

The protein localises to the secreted. Its function is as follows. Catalytically impaired chitinase that binds efficiently to chitin, but not to chitosan, xylan, or cellulose. Despite the lack of chitinolytic activity, retains substrate binding specificity and acts as an effector to prevent chitin-triggered immunity by sequestering immunogenic chitin fragments. The protein is chitinase-like effector (Chi) of Moniliophthora roreri (Frosty pod rot fungus).